We begin with the raw amino-acid sequence, 186 residues long: uncharacterized protein (186 aa).

Asn-34 carries an N-linked (GlcNAc...) asparagine; by host glycan. The next 3 membrane-spanning stretches (helical) occupy residues 47–67 (IGMV…ATTF), 114–134 (ILET…IVLL), and 144–164 (LEMI…TLFF).

Its subcellular location is the membrane. This is an uncharacterized protein from Acanthamoeba polyphaga mimivirus (APMV).